A 250-amino-acid polypeptide reads, in one-letter code: Histidine utilization repressor (250 aa).

Positions Ala20–Pro88 constitute an HTH gntR-type domain. A DNA-binding region (H-T-H motif) is located at residues Glu48–Arg67.

The protein operates within amino-acid degradation; L-histidine degradation into L-glutamate [regulation]. Its function is as follows. Repressor which binds to the hutP region in the histidine utilization (hut) operon. It blocks the expression of all the hut genes in the absence of inducer. The polypeptide is Histidine utilization repressor (hutC) (Pseudomonas aeruginosa (strain ATCC 15692 / DSM 22644 / CIP 104116 / JCM 14847 / LMG 12228 / 1C / PRS 101 / PAO1)).